The primary structure comprises 125 residues: Protein Turandot F (125 aa).

The N-terminal stretch at 1-19 is a signal peptide; it reads MKTVILFGFLLALLGYLEA.

The protein belongs to the Turandot family.

Its subcellular location is the secreted. A humoral factor that may play a role in stress tolerance. This chain is Protein Turandot F, found in Drosophila melanogaster (Fruit fly).